We begin with the raw amino-acid sequence, 206 residues long: Large ribosomal subunit protein uL4 (206 aa).

Residues 48 to 97 form a disordered region; sequence THAVKNRSLVSGGGKKPWKQKHTGRARQGSTRASQWVGGGKAMGPKPRDY. Basic residues predominate over residues 63–72; the sequence is KPWKQKHTGR.

This sequence belongs to the universal ribosomal protein uL4 family. As to quaternary structure, part of the 50S ribosomal subunit.

In terms of biological role, one of the primary rRNA binding proteins, this protein initially binds near the 5'-end of the 23S rRNA. It is important during the early stages of 50S assembly. It makes multiple contacts with different domains of the 23S rRNA in the assembled 50S subunit and ribosome. Functionally, forms part of the polypeptide exit tunnel. The polypeptide is Large ribosomal subunit protein uL4 (Anaeromyxobacter dehalogenans (strain 2CP-1 / ATCC BAA-258)).